Here is a 118-residue protein sequence, read N- to C-terminus: NLVQFGFMIECAIRNRRPALDFMNYGCYCGTVGRGTPVDDLDRCCQVHDECYATAEKHGCYPSLTTYQWECRQVGNECNSKTQCEVFVCACDLAAAKCLAQEDYNPAHFNINTGERCK.

7 disulfide bridges follow: C11/C71, C27/C117, C29/C45, C44/C98, C51/C91, C60/C84, and C78/C89.

Belongs to the phospholipase A2 family. Group I subfamily. D49 sub-subfamily. In terms of assembly, heterotrimer of alpha, beta, and gamma chains; non-covalently linked. In terms of tissue distribution, expressed by the venom gland.

The protein localises to the secreted. Its function is as follows. Heterotrimer: Snake venom phospholipase A2 (PLA2) heterotrimer that acts as a potent presynaptic neurotoxin by blocking synaptic transmission and synaptic vesicle recycling. May act by binding in a calcium-dependent fashion to neurotonal pentraxin-1 (NPTX1) and neurotonal pentraxin-2 (NPTX2), but not to neuronal pentraxin receptor (NPTXR). Also binds to taipoxin-associated calcium binding protein 49 (RCN2), a protein localized in the lumen of endoplasmic reticulum. Functionally, monomer (beta chain): Snake venom phospholipase A2 homolog that is neither toxic nor enzymatically active. Does not bind calcium. The chain is Neutral phospholipase A2 homolog taipoxin beta chain 2 from Oxyuranus scutellatus scutellatus (Australian taipan).